Consider the following 180-residue polypeptide: Translation initiation factor IF-3 (180 aa).

The protein belongs to the IF-3 family. Monomer.

Its subcellular location is the cytoplasm. Functionally, IF-3 binds to the 30S ribosomal subunit and shifts the equilibrium between 70S ribosomes and their 50S and 30S subunits in favor of the free subunits, thus enhancing the availability of 30S subunits on which protein synthesis initiation begins. This is Translation initiation factor IF-3 from Salmonella paratyphi A (strain ATCC 9150 / SARB42).